The primary structure comprises 85 residues: Acyl carrier protein (85 aa).

One can recognise a Carrier domain in the interval 2 to 78 (SQISERVIDL…DAIAYIESHA (77 aa)). An O-(pantetheine 4'-phosphoryl)serine modification is found at Ser37.

Belongs to the acyl carrier protein (ACP) family. 4'-phosphopantetheine is transferred from CoA to a specific serine of apo-ACP by AcpS. This modification is essential for activity because fatty acids are bound in thioester linkage to the sulfhydryl of the prosthetic group.

It localises to the cytoplasm. It participates in lipid metabolism; fatty acid biosynthesis. Its function is as follows. Carrier of the growing fatty acid chain in fatty acid biosynthesis. This chain is Acyl carrier protein, found in Azobacteroides pseudotrichonymphae genomovar. CFP2.